The chain runs to 565 residues: Granule-bound starch synthase 1b, chloroplastic/amyloplastic (565 aa).

The N-terminal 34 residues, 1–34, are a transit peptide targeting the chloroplast; it reads VFLSMRNKTQLAKRRATNYETHRNSSRTSSPIVC. Lys52 serves as a coordination point for ADP-alpha-D-glucose.

It belongs to the glycosyltransferase 1 family. Bacterial/plant glycogen synthase subfamily.

Its subcellular location is the plastid. The protein resides in the chloroplast. It is found in the amyloplast. The catalysed reaction is an NDP-alpha-D-glucose + [(1-&gt;4)-alpha-D-glucosyl](n) = [(1-&gt;4)-alpha-D-glucosyl](n+1) + a ribonucleoside 5'-diphosphate + H(+). It participates in glycan biosynthesis; starch biosynthesis. Functionally, involved in the synthesis of amylose in endosperm. The chain is Granule-bound starch synthase 1b, chloroplastic/amyloplastic from Hordeum vulgare (Barley).